The following is a 441-amino-acid chain: uncharacterized protein (441 aa).

Transmembrane regions (helical) follow at residues 21 to 41 (VVVA…MSLG), 51 to 71 (LGGG…AVAI), 94 to 114 (AAST…VTMS), 118 to 138 (VIPV…GVFA), 150 to 170 (VLTF…GGIF), 195 to 215 (AMLL…FVSY), 239 to 259 (QHIL…LYTG), 260 to 280 (SMII…VIAW), 291 to 311 (VHMM…AAVM), 334 to 354 (LAAL…GSSF), 363 to 383 (IYVP…ALVG), and 419 to 439 (VVPT…IAAM).

It is found in the cell membrane. This is an uncharacterized protein from Vibrio parahaemolyticus serotype O3:K6 (strain RIMD 2210633).